The sequence spans 26 residues: Melittin (26 aa).

Glycine 1 is modified (N-formylglycine; partial). Glutamine 26 bears the Glutamine amide mark.

It belongs to the melittin family. In terms of assembly, monomer (in solution and for integration into membranes), homotetramer (in solution and potentially as a toroidal pore in membranes), and potenially homomultimer (as a toroidal pore in membranes). As to expression, expressed by the venom gland.

It localises to the secreted. Its subcellular location is the target cell membrane. Main toxin of bee venom with strong hemolytic activity and antimicrobial activity. It has enhancing effects on bee venom phospholipase A2 activity. This amphipathic toxin binds to negatively charged membrane surface and forms pore by inserting into lipid bilayers inducing the leakage of ions and molecules and the enhancement of permeability that ultimately leads to cell lysis. It acts as a voltage-gated pore with higher selectivity for anions over cations. The ion conductance has been shown to be voltage-dependent. Self-association of melittin in membranes is promoted by high ionic strength, but not by the presence of negatively charged lipids. In vivo, intradermal injection into healthy human volunteers produce sharp pain sensation and an inflammatory response. It produces pain by activating primary nociceptor cells directly and indirectly due to its ability to activate plasma membrane phospholipase A2 and its pore-forming activity. The polypeptide is Melittin (MELT) (Apis florea (Dwarf honeybee)).